The sequence spans 175 residues: Adenylyl-sulfate kinase (175 aa).

An ATP-binding site is contributed by Gly12 to Thr19. The active-site Phosphoserine intermediate is Ser86.

It belongs to the APS kinase family.

It catalyses the reaction adenosine 5'-phosphosulfate + ATP = 3'-phosphoadenylyl sulfate + ADP + H(+). The protein operates within sulfur metabolism; hydrogen sulfide biosynthesis; sulfite from sulfate: step 2/3. Functionally, catalyzes the synthesis of activated sulfate. The chain is Adenylyl-sulfate kinase from Synechococcus sp. (strain JA-2-3B'a(2-13)) (Cyanobacteria bacterium Yellowstone B-Prime).